We begin with the raw amino-acid sequence, 266 residues long: Glucagon-1 (266 aa).

The first 20 residues, 1-20 (MKSTCYMIGILLMILQNTYQ), serve as a signal peptide directing secretion. 6 propeptides span residues 21-50 (SPVP…LKEV), 84-95 (SGELSRRNADYE), 136-140 (NAEFE), 175-178 (IRYS), 213-224 (NFSEVHSVEEMD), and 261-266 (DLLEEQ). Over residues 23–32 (VPETDANSRS) the composition is skewed to polar residues. A disordered region spans residues 23–44 (VPETDANSRSVKAARNEAVDDS).

This sequence belongs to the glucagon family.

Its subcellular location is the secreted. Its function is as follows. Promotes hydrolysis of glycogen and lipids, and raises the blood sugar level. This Xenopus laevis (African clawed frog) protein is Glucagon-1 (gcg1).